The primary structure comprises 273 residues: Probable membrane transporter protein YunE (273 aa).

The next 8 helical transmembrane spans lie at 3–23, 50–70, 81–101, 105–125, 157–177, 185–205, 222–242, and 251–271; these read FVIL…IGLG, AIGT…LAYI, LIFF…SKLF, SFSV…MLKA, VGIA…IGGG, MLLF…IIFL, WLYA…GAAI, and IVMI…YEGI.

Belongs to the 4-toluene sulfonate uptake permease (TSUP) (TC 2.A.102) family.

It localises to the cell membrane. The chain is Probable membrane transporter protein YunE (yunE) from Bacillus subtilis (strain 168).